Reading from the N-terminus, the 447-residue chain is ATP-dependent protease ATPase subunit HslU (447 aa).

Residues Ile18, 60-65 (GVGKTE), Asp259, Glu325, and Arg397 each bind ATP.

It belongs to the ClpX chaperone family. HslU subfamily. In terms of assembly, a double ring-shaped homohexamer of HslV is capped on each side by a ring-shaped HslU homohexamer. The assembly of the HslU/HslV complex is dependent on binding of ATP.

It is found in the cytoplasm. In terms of biological role, ATPase subunit of a proteasome-like degradation complex; this subunit has chaperone activity. The binding of ATP and its subsequent hydrolysis by HslU are essential for unfolding of protein substrates subsequently hydrolyzed by HslV. HslU recognizes the N-terminal part of its protein substrates and unfolds these before they are guided to HslV for hydrolysis. The chain is ATP-dependent protease ATPase subunit HslU from Burkholderia thailandensis (strain ATCC 700388 / DSM 13276 / CCUG 48851 / CIP 106301 / E264).